Reading from the N-terminus, the 250-residue chain is Transmembrane ascorbate-dependent reductase CYB561 (250 aa).

Methionine 1 is subject to N-acetylmethionine. Over 1-15 the chain is Cytoplasmic; that stretch reads MEHSSASVPAALPYY. A helical transmembrane segment spans residues 16–36; that stretch reads VAFSQLLGLTVVAVTGAWLGL. The Cytochrome b561 domain occupies 18-219; the sequence is FSQLLGLTVV…FGVVVLYILA (202 aa). The Vesicular segment spans residues 37-50; sequence YRGGIAWESSLQFN. Residues 51–71 traverse the membrane as a helical segment; sequence VHPLCMVIGMIFLQGDALLVY. Residues histidine 52, arginine 72, and lysine 79 each contribute to the heme b site. Residues 72–83 are Cytoplasmic-facing; it reads RVFRREAKRTTK. L-ascorbate-binding residues include lysine 79 and lysine 83. A helical membrane pass occupies residues 84–104; that stretch reads ILHGLLHVFAFIIALVGLVAV. Heme b-binding positions include histidine 86, 115–118, and histidine 120; that span reads DLYS. Topologically, residues 105-123 are vesicular; sequence FDYHKKKGYADLYSLHSWC. The chain crosses the membrane as a helical span at residues 124–144; the sequence is GILVFVLYFVQWLVGFSFFLF. Residues 145–157 lie on the Cytoplasmic side of the membrane; sequence PGASFSLRSRYRP. Arginine 152 contributes to the L-ascorbate binding site. The helical transmembrane segment at 158–178 threads the bilayer; that stretch reads QHIFFGATIFLFSVGTALLGL. Positions 159 and 180 each coordinate heme b. The Vesicular segment spans residues 179–197; the sequence is KEALLFKLGSKYSTFEPEG. A helical transmembrane segment spans residues 198 to 218; that stretch reads VLANVLGLLLVCFGVVVLYIL. Over 219-250 the chain is Cytoplasmic; it reads AQADWKRPSQAEEQALSMDFKTLTEGDSPSPQ. Position 224 (lysine 224) interacts with heme b. A phosphoserine mark is found at serine 246 and serine 248.

Heme b serves as cofactor. Abundantly distributed in a number of neuroendocrine tissues.

It localises to the cytoplasmic vesicle. The protein localises to the secretory vesicle. It is found in the chromaffin granule membrane. It carries out the reaction monodehydro-L-ascorbate radical(out) + L-ascorbate(in) = monodehydro-L-ascorbate radical(in) + L-ascorbate(out). In terms of biological role, transmembrane reductase that uses ascorbate as an electron donor in the cytoplasm and transfers electrons across membranes to reduce monodehydro-L-ascorbate radical in the lumen of secretory vesicles. It is therefore involved the regeneration and homeostasis within secretory vesicles of ascorbate which in turn provides reducing equivalents needed to support the activity of intravesicular enzymes. This chain is Transmembrane ascorbate-dependent reductase CYB561, found in Mus musculus (Mouse).